We begin with the raw amino-acid sequence, 200 residues long: Imidazoleglycerol-phosphate dehydratase (200 aa).

Substrate contacts are provided by residues Glu-13, 39–47 (HMLTLLTFH), 68–72 (HHLIE), Arg-94, and Arg-116. Mn(2+) is bound by residues His-39, His-68, His-69, and Glu-72. The Mn(2+) site is built by Glu-141, His-165, His-166, and Glu-169. Residues 165-173 (HHIIEGMFK) and 195-197 (SSK) each bind substrate.

This sequence belongs to the imidazoleglycerol-phosphate dehydratase family. Requires Mn(2+) as cofactor.

The protein resides in the cytoplasm. The catalysed reaction is D-erythro-1-(imidazol-4-yl)glycerol 3-phosphate = 3-(imidazol-4-yl)-2-oxopropyl phosphate + H2O. It functions in the pathway amino-acid biosynthesis; L-histidine biosynthesis; L-histidine from 5-phospho-alpha-D-ribose 1-diphosphate: step 6/9. The protein is Imidazoleglycerol-phosphate dehydratase (hisB) of Lactococcus lactis subsp. lactis (strain IL1403) (Streptococcus lactis).